A 576-amino-acid chain; its full sequence is Arginine--tRNA ligase (576 aa).

Positions 122–132 (PNVAKEMHVGH) match the 'HIGH' region motif.

This sequence belongs to the class-I aminoacyl-tRNA synthetase family. Monomer.

Its subcellular location is the cytoplasm. It catalyses the reaction tRNA(Arg) + L-arginine + ATP = L-arginyl-tRNA(Arg) + AMP + diphosphate. This Erwinia tasmaniensis (strain DSM 17950 / CFBP 7177 / CIP 109463 / NCPPB 4357 / Et1/99) protein is Arginine--tRNA ligase.